The following is a 72-amino-acid chain: Disintegrin crotatroxin (72 aa).

Residues 1-72 (AGEECDCGSP…ADCPRNGLYG (72 aa)) enclose the Disintegrin domain. Cystine bridges form between Cys-5/Cys-20, Cys-7/Cys-15, Cys-14/Cys-37, Cys-28/Cys-34, Cys-33/Cys-58, and Cys-46/Cys-65. Residues 50–52 (RGD) carry the Cell attachment site motif.

It belongs to the venom metalloproteinase (M12B) family. P-II subfamily. P-IIa sub-subfamily. Monomer. As to expression, expressed by the venom gland.

The protein resides in the secreted. Functionally, inhibits fibrinogen interaction with platelets. Acts by binding to the alpha-IIb/beta-3 (ITGA2B/ITGB3) on the platelet surface and inhibits aggregation induced by ADP, thrombin, platelet-activating factor and collagen. Inhibits ADP-induced platelet aggregation (IC(50) = 17.5nM), cancer cell migration in vitro, and experimental lung tumor colonization of cancer cells. The sequence is that of Disintegrin crotatroxin from Crotalus atrox (Western diamondback rattlesnake).